We begin with the raw amino-acid sequence, 196 residues long: ATP-dependent Clp protease proteolytic subunit (196 aa).

Serine 96 functions as the Nucleophile in the catalytic mechanism. The active site involves histidine 121.

It belongs to the peptidase S14 family. In terms of assembly, fourteen ClpP subunits assemble into 2 heptameric rings which stack back to back to give a disk-like structure with a central cavity, resembling the structure of eukaryotic proteasomes.

The protein resides in the cytoplasm. It carries out the reaction Hydrolysis of proteins to small peptides in the presence of ATP and magnesium. alpha-casein is the usual test substrate. In the absence of ATP, only oligopeptides shorter than five residues are hydrolyzed (such as succinyl-Leu-Tyr-|-NHMec, and Leu-Tyr-Leu-|-Tyr-Trp, in which cleavage of the -Tyr-|-Leu- and -Tyr-|-Trp bonds also occurs).. Functionally, cleaves peptides in various proteins in a process that requires ATP hydrolysis. Has a chymotrypsin-like activity. Plays a major role in the degradation of misfolded proteins. This Streptococcus uberis (strain ATCC BAA-854 / 0140J) protein is ATP-dependent Clp protease proteolytic subunit.